Consider the following 372-residue polypeptide: Flap endonuclease 1 (372 aa).

The segment at 1-105 is N-domain; the sequence is MGVKGLNQLI…GELEKRLLRR (105 aa). A Mg(2+)-binding site is contributed by aspartate 34. Positions 47 and 71 each coordinate DNA. Aspartate 87, glutamate 159, glutamate 161, aspartate 180, and aspartate 182 together coordinate Mg(2+). Residues 123-254 form an I-domain region; it reads EVLKFEKRLV…ATAFKLIKEH (132 aa). Residue glutamate 159 participates in DNA binding. Residues glycine 232 and aspartate 234 each contribute to the DNA site. A Mg(2+)-binding site is contributed by aspartate 234. An interaction with PCNA region spans residues 339-347; it reads VQGRLDGFF.

The protein belongs to the XPG/RAD2 endonuclease family. FEN1 subfamily. Interacts with PCNA. Three molecules of RAD27 bind to one PCNA trimer with each molecule binding to one PCNA monomer. PCNA stimulates the nuclease activity without altering cleavage specificity. Mg(2+) is required as a cofactor. Post-translationally, phosphorylated. Phosphorylation upon DNA damage induces relocalization to the nuclear plasma.

It localises to the nucleus. It is found in the nucleolus. The protein localises to the nucleoplasm. Its subcellular location is the mitochondrion. In terms of biological role, structure-specific nuclease with 5'-flap endonuclease and 5'-3' exonuclease activities involved in DNA replication and repair. During DNA replication, cleaves the 5'-overhanging flap structure that is generated by displacement synthesis when DNA polymerase encounters the 5'-end of a downstream Okazaki fragment. It enters the flap from the 5'-end and then tracks to cleave the flap base, leaving a nick for ligation. Also involved in the long patch base excision repair (LP-BER) pathway, by cleaving within the apurinic/apyrimidinic (AP) site-terminated flap. Acts as a genome stabilization factor that prevents flaps from equilibrating into structures that lead to duplications and deletions. Also possesses 5'-3' exonuclease activity on nicked or gapped double-stranded DNA, and exhibits RNase H activity. Also involved in replication and repair of rDNA and in repairing mitochondrial DNA. The protein is Flap endonuclease 1 of Candida dubliniensis (strain CD36 / ATCC MYA-646 / CBS 7987 / NCPF 3949 / NRRL Y-17841) (Yeast).